A 215-amino-acid polypeptide reads, in one-letter code: Cytochrome b6 (215 aa).

Residues 32–52 (IFYCLGGITLTCFLVQVATGF) form a helical membrane-spanning segment. Cys-35 lines the heme c pocket. Positions 86 and 100 each coordinate heme b. 3 consecutive transmembrane segments (helical) span residues 90–110 (ASMM…TGGF), 116–136 (LTWV…VTGY), and 186–206 (LHTF…FPMI). Positions 187 and 202 each coordinate heme b.

This sequence belongs to the cytochrome b family. PetB subfamily. In terms of assembly, the 4 large subunits of the cytochrome b6-f complex are cytochrome b6, subunit IV (17 kDa polypeptide, PetD), cytochrome f and the Rieske protein, while the 4 small subunits are PetG, PetL, PetM and PetN. The complex functions as a dimer. It depends on heme b as a cofactor. The cofactor is heme c.

The protein resides in the plastid. The protein localises to the chloroplast thylakoid membrane. In terms of biological role, component of the cytochrome b6-f complex, which mediates electron transfer between photosystem II (PSII) and photosystem I (PSI), cyclic electron flow around PSI, and state transitions. The polypeptide is Cytochrome b6 (Saccharum hybrid (Sugarcane)).